The following is a 252-amino-acid chain: Mediator of RNA polymerase II transcription subunit 20 (252 aa).

It belongs to the Mediator complex subunit 20 family. As to quaternary structure, component of the Mediator complex, which includes at least CDK8, MED4, MED6, MED11, MED14, MED17, MED18, MED20, MED21, MED22, MED27, MED28, MED30 and MED31.

Its subcellular location is the nucleus. Component of the Mediator complex, a coactivator involved in the regulated transcription of nearly all RNA polymerase II-dependent genes. Mediator functions as a bridge to convey information from gene-specific regulatory proteins to the basal RNA polymerase II transcription machinery. Mediator is recruited to promoters by direct interactions with regulatory proteins and serves as a scaffold for the assembly of a functional preinitiation complex with RNA polymerase II and the general transcription factors. Required for activated transcription of the MtnA gene. This chain is Mediator of RNA polymerase II transcription subunit 20 (MED20), found in Drosophila melanogaster (Fruit fly).